Here is a 299-residue protein sequence, read N- to C-terminus: Methionyl-tRNA formyltransferase (299 aa).

109–112 is a (6S)-5,6,7,8-tetrahydrofolate binding site; it reads SLLP.

This sequence belongs to the Fmt family.

The enzyme catalyses L-methionyl-tRNA(fMet) + (6R)-10-formyltetrahydrofolate = N-formyl-L-methionyl-tRNA(fMet) + (6S)-5,6,7,8-tetrahydrofolate + H(+). Its function is as follows. Attaches a formyl group to the free amino group of methionyl-tRNA(fMet). The formyl group appears to play a dual role in the initiator identity of N-formylmethionyl-tRNA by promoting its recognition by IF2 and preventing the misappropriation of this tRNA by the elongation apparatus. This chain is Methionyl-tRNA formyltransferase, found in Wolbachia sp. subsp. Drosophila simulans (strain wRi).